A 192-amino-acid chain; its full sequence is Flavin prenyltransferase UbiX (192 aa).

Residues 10-12, S36, 92-95, and R127 each bind FMN; these read GAS and SVAT. 2 residues coordinate dimethylallyl phosphate: Y157 and K173.

This sequence belongs to the UbiX/PAD1 family.

The catalysed reaction is dimethylallyl phosphate + FMNH2 = prenylated FMNH2 + phosphate. Flavin prenyltransferase that catalyzes the synthesis of the prenylated FMN cofactor (prenyl-FMN) for 4-hydroxy-3-polyprenylbenzoic acid decarboxylase UbiD. The prenyltransferase is metal-independent and links a dimethylallyl moiety from dimethylallyl monophosphate (DMAP) to the flavin N5 and C6 atoms of FMN. In Chlamydia muridarum (strain MoPn / Nigg), this protein is Flavin prenyltransferase UbiX.